The following is a 294-amino-acid chain: Protoheme IX farnesyltransferase (294 aa).

A run of 9 helical transmembrane segments spans residues 22-42 (VTQL…PDLP), 46-66 (IVIA…AINC), 89-109 (ITVP…MWVL), 116-136 (LTMW…TIIL), 143-163 (NIVI…AAVA), 170-190 (AWIL…ALAL), 211-231 (AFTQ…TMLP), 232-252 (FAVG…DVIF), and 272-292 (FTYS…DHYL).

The protein belongs to the UbiA prenyltransferase family. Protoheme IX farnesyltransferase subfamily.

It localises to the cell inner membrane. It carries out the reaction heme b + (2E,6E)-farnesyl diphosphate + H2O = Fe(II)-heme o + diphosphate. The protein operates within porphyrin-containing compound metabolism; heme O biosynthesis; heme O from protoheme: step 1/1. Converts heme B (protoheme IX) to heme O by substitution of the vinyl group on carbon 2 of heme B porphyrin ring with a hydroxyethyl farnesyl side group. The protein is Protoheme IX farnesyltransferase of Herminiimonas arsenicoxydans.